The chain runs to 340 residues: Erlin-2 (340 aa).

The Cytoplasmic portion of the chain corresponds to 1–3 (MAQ). A helical membrane pass occupies residues 4 to 24 (LGAVVAVASSFFCASLFSAVH). The Lumenal portion of the chain corresponds to 25-340 (KIEEGHIGVY…EPLEAPTKEN (316 aa)). Asn106 carries N-linked (GlcNAc...) asparagine glycosylation. The interaction with ERLIN1 stretch occupies residues 177–309 (EAIRRNYELM…DIPNMFMDSA (133 aa)). An N6-acetyllysine modification is found at Lys267.

This sequence belongs to the band 7/mec-2 family. As to quaternary structure, forms a heteromeric complex with ERLIN1. In complex with ERLIN1, interacts with RNF170. Interacts with activated ITPR1, independently of the degree of ITPR1 polyubiquitination. Interacts with SCAP, INSIG1, SREBF1 and SREBF2 under cholesterol sufficiency conditions; indicative for an association with the SCAP-SREBP-INSIG complex. Probably part of an AMFR/gp78 and INSIG1-containing ubiquitin ligase complex involved in ERAD of HMGCR. Interacts with TMUB1; TMUB1 bridges the association with AMFR. Interacts with SYVN1 and RNF139. Interacts with TMEM259. Interacts with TMEM41B. Deubiquitinated by USP25; leading to stabilization.

The protein resides in the endoplasmic reticulum membrane. Component of the ERLIN1/ERLIN2 complex which mediates the endoplasmic reticulum-associated degradation (ERAD) of inositol 1,4,5-trisphosphate receptors (IP3Rs) such as ITPR1. Promotes sterol-accelerated ERAD of HMGCR probably implicating an AMFR/gp78-containing ubiquitin ligase complex. Involved in regulation of cellular cholesterol homeostasis by regulation the SREBP signaling pathway. May promote ER retention of the SCAP-SREBF complex. This is Erlin-2 (Erlin2) from Mus musculus (Mouse).